The following is a 141-amino-acid chain: Large ribosomal subunit protein uL11 (141 aa).

It belongs to the universal ribosomal protein uL11 family. In terms of assembly, part of the ribosomal stalk of the 50S ribosomal subunit. Interacts with L10 and the large rRNA to form the base of the stalk. L10 forms an elongated spine to which L12 dimers bind in a sequential fashion forming a multimeric L10(L12)X complex. One or more lysine residues are methylated.

Its function is as follows. Forms part of the ribosomal stalk which helps the ribosome interact with GTP-bound translation factors. The sequence is that of Large ribosomal subunit protein uL11 from Streptococcus uberis (strain ATCC BAA-854 / 0140J).